The following is a 253-amino-acid chain: Phosphate import ATP-binding protein PstB (253 aa).

Residues 1–249 form the ABC transporter domain; it reads MKLMDVRVSG…PRHELTKKFL (249 aa). 38-45 lines the ATP pocket; the sequence is GPSGSGKS.

This sequence belongs to the ABC transporter superfamily. Phosphate importer (TC 3.A.1.7) family. The complex is composed of two ATP-binding proteins (PstB), two transmembrane proteins (PstC and PstA) and a solute-binding protein (PstS).

The protein localises to the cell membrane. The catalysed reaction is phosphate(out) + ATP + H2O = ADP + 2 phosphate(in) + H(+). Part of the ABC transporter complex PstSACB involved in phosphate import. Responsible for energy coupling to the transport system. The polypeptide is Phosphate import ATP-binding protein PstB (Aeropyrum pernix (strain ATCC 700893 / DSM 11879 / JCM 9820 / NBRC 100138 / K1)).